We begin with the raw amino-acid sequence, 689 residues long: Glycine--tRNA ligase beta subunit (689 aa).

Belongs to the class-II aminoacyl-tRNA synthetase family. In terms of assembly, tetramer of two alpha and two beta subunits.

It is found in the cytoplasm. The enzyme catalyses tRNA(Gly) + glycine + ATP = glycyl-tRNA(Gly) + AMP + diphosphate. This is Glycine--tRNA ligase beta subunit from Photobacterium profundum (strain SS9).